The following is a 567-amino-acid chain: 25S rRNA (cytosine-C(5))-methyltransferase NSUN5 (567 aa).

Positions 1–17 (MVARRNKPKAPLVKHRF) are enriched in basic residues. The tract at residues 1–88 (MVARRNKPKA…KTPPATKQKF (88 aa)) is disordered. S-adenosyl-L-methionine is bound by residues 312–318 (CSAPGNK), glutamate 336, aspartate 363, and aspartate 383. The active-site Nucleophile is cysteine 444.

This sequence belongs to the class I-like SAM-binding methyltransferase superfamily. RsmB/NOP family.

The catalysed reaction is a cytidine in 25S rRNA + S-adenosyl-L-methionine = a 5-methylcytidine in 25S rRNA + S-adenosyl-L-homocysteine + H(+). Its function is as follows. S-adenosyl-L-methionine-dependent methyltransferase that specifically methylates the C(5) position of cytosine 2268 (m5C2268) in 25S rRNA. This Arabidopsis thaliana (Mouse-ear cress) protein is 25S rRNA (cytosine-C(5))-methyltransferase NSUN5.